The primary structure comprises 444 residues: Xaa-Pro dipeptidase (444 aa).

Mn(2+) is bound by residues aspartate 247, aspartate 258, histidine 340, glutamate 385, and glutamate 424.

It belongs to the peptidase M24B family. Bacterial-type prolidase subfamily. It depends on Mn(2+) as a cofactor.

It catalyses the reaction Xaa-L-Pro dipeptide + H2O = an L-alpha-amino acid + L-proline. Its function is as follows. Splits dipeptides with a prolyl residue in the C-terminal position. This is Xaa-Pro dipeptidase from Proteus mirabilis (strain HI4320).